A 340-amino-acid polypeptide reads, in one-letter code: Cytoskeleton protein RodZ (340 aa).

The Cytoplasmic segment spans residues 1–111 (MNTEATQEKS…LGKQRKKRDG (111 aa)). In terms of domain architecture, HTH cro/C1-type spans 19 to 79 (LRTAREQMGL…RLVHVPEEEL (61 aa)). Positions 30-49 (QQNVAERLCLKLSTIRDIEE) form a DNA-binding region, H-T-H motif. A helical; Signal-anchor for type II membrane protein transmembrane segment spans residues 112 to 132 (WLMIFTWLVLFVVLGLTGAWW). Residues 133-340 (WQNHKAAQDD…QVARLTVGAP (208 aa)) lie on the Periplasmic side of the membrane. A disordered region spans residues 162–252 (ALSDDNANGG…AAPLPTGSAA (91 aa)). The segment covering 183–201 (ATANNAPSSVTATSDNGTP) has biased composition (polar residues). Positions 202–233 (AATAQSSQVTASNAAPAANAVNDNTPPVAVAP) are enriched in low complexity.

Belongs to the RodZ family.

It localises to the cell inner membrane. In terms of biological role, cytoskeletal protein that is involved in cell-shape control through regulation of the length of the long axis. The polypeptide is Cytoskeleton protein RodZ (Erwinia tasmaniensis (strain DSM 17950 / CFBP 7177 / CIP 109463 / NCPPB 4357 / Et1/99)).